The chain runs to 106 residues: uncharacterized protein (106 aa).

This is an uncharacterized protein from Escherichia coli O157:H7.